A 317-amino-acid polypeptide reads, in one-letter code: Porphobilinogen deaminase (317 aa).

C245 carries the S-(dipyrrolylmethanemethyl)cysteine modification.

The protein belongs to the HMBS family. Monomer. Dipyrromethane is required as a cofactor.

It carries out the reaction 4 porphobilinogen + H2O = hydroxymethylbilane + 4 NH4(+). It participates in porphyrin-containing compound metabolism; protoporphyrin-IX biosynthesis; coproporphyrinogen-III from 5-aminolevulinate: step 2/4. The protein operates within porphyrin-containing compound metabolism; chlorophyll biosynthesis. Functionally, tetrapolymerization of the monopyrrole PBG into the hydroxymethylbilane pre-uroporphyrinogen in several discrete steps. The protein is Porphobilinogen deaminase of Prochlorococcus marinus (strain MIT 9303).